Consider the following 117-residue polypeptide: UPF0102 protein Ssed_4252 (117 aa).

It belongs to the UPF0102 family.

In Shewanella sediminis (strain HAW-EB3), this protein is UPF0102 protein Ssed_4252.